The following is a 137-amino-acid chain: Nucleoside diphosphate kinase (137 aa).

K9, F57, R85, T91, R102, and N112 together coordinate ATP. Catalysis depends on H115, which acts as the Pros-phosphohistidine intermediate.

This sequence belongs to the NDK family. In terms of assembly, homotetramer. Requires Mg(2+) as cofactor.

Its subcellular location is the cytoplasm. It carries out the reaction a 2'-deoxyribonucleoside 5'-diphosphate + ATP = a 2'-deoxyribonucleoside 5'-triphosphate + ADP. The catalysed reaction is a ribonucleoside 5'-diphosphate + ATP = a ribonucleoside 5'-triphosphate + ADP. In terms of biological role, major role in the synthesis of nucleoside triphosphates other than ATP. The ATP gamma phosphate is transferred to the NDP beta phosphate via a ping-pong mechanism, using a phosphorylated active-site intermediate. The polypeptide is Nucleoside diphosphate kinase (Syntrophotalea carbinolica (strain DSM 2380 / NBRC 103641 / GraBd1) (Pelobacter carbinolicus)).